The chain runs to 1204 residues: Integrator complex subunit 2 (1204 aa).

The helical transmembrane segment at 428 to 444 threads the bilayer; sequence FVSLSFCMLLAFSTLVS.

Belongs to the Integrator subunit 2 family. Component of the Integrator complex, composed of core subunits INTS1, INTS2, INTS3, INTS4, INTS5, INTS6, INTS7, INTS8, INTS9/RC74, INTS10, INTS11/CPSF3L, INTS12, INTS13, INTS14 and INTS15. The core complex associates with protein phosphatase 2A subunits PPP2CA and PPP2R1A, to form the Integrator-PP2A (INTAC) complex.

The protein resides in the nucleus. The protein localises to the nucleus membrane. It is found in the cytoplasm. In terms of biological role, component of the integrator complex, a multiprotein complex that terminates RNA polymerase II (Pol II) transcription in the promoter-proximal region of genes. The integrator complex provides a quality checkpoint during transcription elongation by driving premature transcription termination of transcripts that are unfavorably configured for transcriptional elongation: the complex terminates transcription by (1) catalyzing dephosphorylation of the C-terminal domain (CTD) of Pol II subunit POLR2A/RPB1 and SUPT5H/SPT5, (2) degrading the exiting nascent RNA transcript via endonuclease activity and (3) promoting the release of Pol II from bound DNA. The integrator complex is also involved in terminating the synthesis of non-coding Pol II transcripts, such as enhancer RNAs (eRNAs), small nuclear RNAs (snRNAs), telomerase RNAs and long non-coding RNAs (lncRNAs). Mediates recruitment of cytoplasmic dynein to the nuclear envelope, probably as component of the integrator complex. This is Integrator complex subunit 2 from Homo sapiens (Human).